The chain runs to 380 residues: Erythronate-4-phosphate dehydrogenase (380 aa).

Residues S45 and T66 each contribute to the substrate site. NAD(+) contacts are provided by D146 and T174. R207 is a catalytic residue. Residue D231 participates in NAD(+) binding. Residue E236 is part of the active site. Catalysis depends on H253, which acts as the Proton donor. Residue G256 participates in NAD(+) binding. Y257 contacts substrate.

Belongs to the D-isomer specific 2-hydroxyacid dehydrogenase family. PdxB subfamily. Homodimer.

Its subcellular location is the cytoplasm. The catalysed reaction is 4-phospho-D-erythronate + NAD(+) = (R)-3-hydroxy-2-oxo-4-phosphooxybutanoate + NADH + H(+). It participates in cofactor biosynthesis; pyridoxine 5'-phosphate biosynthesis; pyridoxine 5'-phosphate from D-erythrose 4-phosphate: step 2/5. Catalyzes the oxidation of erythronate-4-phosphate to 3-hydroxy-2-oxo-4-phosphonooxybutanoate. This Pseudomonas fluorescens (strain ATCC BAA-477 / NRRL B-23932 / Pf-5) protein is Erythronate-4-phosphate dehydrogenase.